The primary structure comprises 130 residues: Small ribosomal subunit protein uS11 (130 aa).

The protein belongs to the universal ribosomal protein uS11 family. In terms of assembly, part of the 30S ribosomal subunit. Interacts with proteins S7 and S18. Binds to IF-3.

In terms of biological role, located on the platform of the 30S subunit, it bridges several disparate RNA helices of the 16S rRNA. Forms part of the Shine-Dalgarno cleft in the 70S ribosome. This is Small ribosomal subunit protein uS11 from Caldicellulosiruptor bescii (strain ATCC BAA-1888 / DSM 6725 / KCTC 15123 / Z-1320) (Anaerocellum thermophilum).